Consider the following 1231-residue polypeptide: Multifunctional 2-oxoglutarate metabolism enzyme (1231 aa).

The interval 1-41 (MANISSPFGQNEWLVEAMYRKFRDDPSSVDPSWHEFLVDYS) is 2-oxoglutarate dehydrogenase E1, N-terminal part. Positions 24 to 37 (DDPSSVDPSWHEFL) are enriched in basic and acidic residues. The tract at residues 24–56 (DDPSSVDPSWHEFLVDYSPEPTSQPAAEPTRVT) is disordered. The tract at residues 42–88 (PEPTSQPAAEPTRVTSPLVAERAAAAAPQAPPKPADTAAAGNGVVAA) is linker. The tract at residues 89 to 337 (LAAKTAVPPP…LRTIHELLLS (249 aa)) is succinyltransferase E2. His316 acts as the Proton acceptor; for succinyltransferase activity in catalysis. The segment at 338-1231 (DGFWDEVFRE…QQEILDEAFG (894 aa)) is 2-oxoglutarate dehydrogenase E1, C-terminal part. Residue Arg542 coordinates thiamine diphosphate. His581 and Ser606 together coordinate 2-oxoglutarate. Residues Ser606, Leu608, Asp649, Ala650, Ala651, and Asn682 each coordinate thiamine diphosphate. Mg(2+) is bound at residue Asp649. The Mg(2+) site is built by Asn682 and Ile684. Residues 787–817 (DISMKEAEDALRDYQGQLERVFNEVRELEKH) adopt a coiled-coil conformation. 2-oxoglutarate is bound at residue His1024. Residues Thr1042, Arg1058, Lys1093, Ser1096, Gln1146, Arg1153, and Arg1154 each coordinate acetyl-CoA.

It belongs to the 2-oxoacid dehydrogenase family. Kgd subfamily. Homodimer. The 2-oxoglutarate dehydrogenase (ODH) complex contains multiple copies of three enzymatic components: 2-oxoglutarate dehydrogenase (E1), dihydrolipoamide succinyltransferase (E2) and lipoamide dehydrogenase (E3). Requires Mg(2+) as cofactor. It depends on thiamine diphosphate as a cofactor.

It carries out the reaction glyoxylate + 2-oxoglutarate + H(+) = 2-hydroxy-3-oxoadipate + CO2. It catalyses the reaction 2-oxoglutarate + H(+) = succinate semialdehyde + CO2. The catalysed reaction is N(6)-[(R)-lipoyl]-L-lysyl-[protein] + 2-oxoglutarate + H(+) = N(6)-[(R)-S(8)-succinyldihydrolipoyl]-L-lysyl-[protein] + CO2. The enzyme catalyses N(6)-[(R)-dihydrolipoyl]-L-lysyl-[protein] + succinyl-CoA = N(6)-[(R)-S(8)-succinyldihydrolipoyl]-L-lysyl-[protein] + CoA. Its pathway is carbohydrate metabolism; tricarboxylic acid cycle; succinate from 2-oxoglutarate (transferase route): step 1/2. The protein operates within carbohydrate metabolism; tricarboxylic acid cycle; succinyl-CoA from 2-oxoglutarate (dehydrogenase route): step 1/1. With respect to regulation, alpha-ketoglutarate dehydrogenase and decarboxylase activities are inhibited by unphosphorylated GarA, and allosterically activated by acetyl-CoA, the main substrate of the TCA cycle. Functionally, shows three enzymatic activities that share a first common step, the attack of thiamine-PP on 2-oxoglutarate (alpha-ketoglutarate, KG), leading to the formation of an enamine-thiamine-PP intermediate upon decarboxylation. Thus, displays KGD activity, catalyzing the decarboxylation from five-carbon 2-oxoglutarate to four-carbon succinate semialdehyde (SSA). Also catalyzes C-C bond formation between the activated aldehyde formed after decarboxylation of alpha-ketoglutarate and the carbonyl of glyoxylate (GLX), to yield 2-hydroxy-3-oxoadipate (HOA), which spontaneously decarboxylates to form 5-hydroxylevulinate (HLA). And is also a component of the 2-oxoglutarate dehydrogenase (ODH) complex, that catalyzes the overall conversion of 2-oxoglutarate to succinyl-CoA and CO(2). The KG decarboxylase and KG dehydrogenase reactions provide two alternative, tightly regulated, pathways connecting the oxidative and reductive branches of the TCA cycle. This Mycobacterium bovis (strain ATCC BAA-935 / AF2122/97) protein is Multifunctional 2-oxoglutarate metabolism enzyme (kgd).